The sequence spans 630 residues: Protein phosphatase 2C-like domain-containing protein 1 (630 aa).

In terms of domain architecture, PPM-type phosphatase spans 170–621; sequence GVGICEDRNS…DNITVMVIFL (452 aa). Residues 557–569 are compositionally biased toward basic and acidic residues; that stretch reads TTHRKPCSEKVTD. Residues 557-578 form a disordered region; the sequence is TTHRKPCSEKVTDRPTSVNDVA.

Belongs to the PP2C family.

In Homo sapiens (Human), this protein is Protein phosphatase 2C-like domain-containing protein 1 (PP2D1).